Reading from the N-terminus, the 642-residue chain is Chaperone protein DnaK (642 aa).

Threonine 200 carries the phosphothreonine; by autocatalysis modification. The segment covering 608–618 (QAESQAAGEGQ) has biased composition (low complexity). The tract at residues 608 to 642 (QAESQAAGEGQPDAGKKDDGNVVDAEFEEVKKDKQ) is disordered.

This sequence belongs to the heat shock protein 70 family.

Functionally, acts as a chaperone. This is Chaperone protein DnaK from Laribacter hongkongensis (strain HLHK9).